Reading from the N-terminus, the 100-residue chain is Aspartyl/glutamyl-tRNA(Asn/Gln) amidotransferase subunit C (100 aa).

This sequence belongs to the GatC family. As to quaternary structure, heterotrimer of A, B and C subunits.

It carries out the reaction L-glutamyl-tRNA(Gln) + L-glutamine + ATP + H2O = L-glutaminyl-tRNA(Gln) + L-glutamate + ADP + phosphate + H(+). It catalyses the reaction L-aspartyl-tRNA(Asn) + L-glutamine + ATP + H2O = L-asparaginyl-tRNA(Asn) + L-glutamate + ADP + phosphate + 2 H(+). Its function is as follows. Allows the formation of correctly charged Asn-tRNA(Asn) or Gln-tRNA(Gln) through the transamidation of misacylated Asp-tRNA(Asn) or Glu-tRNA(Gln) in organisms which lack either or both of asparaginyl-tRNA or glutaminyl-tRNA synthetases. The reaction takes place in the presence of glutamine and ATP through an activated phospho-Asp-tRNA(Asn) or phospho-Glu-tRNA(Gln). The protein is Aspartyl/glutamyl-tRNA(Asn/Gln) amidotransferase subunit C of Rickettsia canadensis (strain McKiel).